The following is a 387-amino-acid chain: 3-ketoacyl-CoA thiolase (387 aa).

Cys91 functions as the Acyl-thioester intermediate in the catalytic mechanism. Catalysis depends on proton acceptor residues His343 and Cys373.

The protein belongs to the thiolase-like superfamily. Thiolase family. Heterotetramer of two alpha chains (FadB) and two beta chains (FadA).

It localises to the cytoplasm. The catalysed reaction is an acyl-CoA + acetyl-CoA = a 3-oxoacyl-CoA + CoA. Its pathway is lipid metabolism; fatty acid beta-oxidation. Its function is as follows. Catalyzes the final step of fatty acid oxidation in which acetyl-CoA is released and the CoA ester of a fatty acid two carbons shorter is formed. The sequence is that of 3-ketoacyl-CoA thiolase from Shewanella sp. (strain W3-18-1).